Here is a 150-residue protein sequence, read N- to C-terminus: Viral late gene transcription factor 2 (150 aa).

The protein belongs to the chordopoxvirinae VLTF-2 family. Interacts with itself. Interacts with the late transcription factors VLTF-1.

Acts with RNA polymerase to initiate transcription from late gene promoters. The chain is Viral late gene transcription factor 2 (VLTF2) from Homo sapiens (Human).